We begin with the raw amino-acid sequence, 977 residues long: Serine/threonine-protein kinase/endoribonuclease IRE1 (977 aa).

An N-terminal signal peptide occupies residues 1–20 (MPARWLLLLLALLLPPPGPG). The Lumenal segment spans residues 21–445 (SFGRTSTVTL…EAPVDSMLKD (425 aa)). N-linked (GlcNAc...) asparagine glycosylation is present at Asn-178. Residues 446–466 (MATIILSTFLLVGWVAFIITY) form a helical membrane-spanning segment. At 467–977 (PLSVHQQRQL…PQPPVIPYAL (511 aa)) the chain is on the cytoplasmic side. A disordered region spans residues 498-559 (FHPHGDLTQD…PSLEQDDEDE (62 aa)). Residues 513-551 (SSGPFSESSGTSSPSPSPRASNHSLHPSSSASRAGTSPS) show a composition bias toward low complexity. Residues 571 to 832 (FCPKDVLGHG…AKHVLKHPFF (262 aa)) enclose the Protein kinase domain. Residues 577-585 (LGHGAEGTI), Lys-599, and 643-645 (ELC) contribute to the ATP site. The active-site Proton acceptor; for protein kinase activity is Asp-688. Residues 690-693 (KPHN) and Asp-711 contribute to the ATP site. Phosphoserine is present on residues Ser-724 and Ser-729. The 129-residue stretch at 835 to 963 (LEKQLQFFQD…ERLFQTYYWH (129 aa)) folds into the KEN domain. Residues 906–907 (NK) form an interacts with hydroxy-aryl-aldehyde inhibitors region.

This sequence belongs to the protein kinase superfamily. Ser/Thr protein kinase family. In terms of assembly, monomer. Homodimer; disulfide-linked; homodimerization takes place in response to endoplasmic reticulum stress and promotes activation of the kinase and endoribonuclease activities. Dimer formation is driven by hydrophobic interactions within the N-terminal luminal domains and stabilized by disulfide bridges. Interacts (via the luminal region) with DNAJB9/ERdj4; interaction takes place in unstressed cells and promotes recruitment of HSPA5/BiP. Interacts (via the luminal region) with HSPA5/BiP; HSPA5/BiP is a negative regulator of the unfolded protein response (UPR) that prevents homodimerization of ERN1/IRE1 and subsequent activation of the protein. Interaction with HSPA5 also competitively inhibits ERN1 interaction with MANF. Interacts with PDIA6, a negative regulator of the UPR; the interaction is direct and disrupts homodimerization. Interacts with DAB2IP (via PH domain); the interaction occurs in a endoplasmic reticulum stress-induced dependent manner and is required for subsequent recruitment of TRAF2 to ERN1/IRE1. Interacts with TAOK3 and TRAF2. Interacts with RNF13. Interacts with LACC1. Interacts (when unphosphorylated) with DDRGK1; interaction is dependent on UFM1 and takes place in response to endoplasmic reticulum stress, regulating ERN1/IRE1-alpha stability. Interacts (via N-terminus) with P4HB/PDIA1; the interaction is enhanced by phosphorylation of P4HB by FAM20C in response to endoplasmic reticulum stress and results in attenuation of ERN1 activity. Interacts with TMBIM6; this interaction inhibits ERN1 activity. Interacts (via luminal domain) with MANF (via C-terminus); the interaction is decreased in the presence of increasing concentrations of Ca(2+). Mg(2+) is required as a cofactor. In terms of processing, autophosphorylated following homodimerization. Autophosphorylation promotes activation of the endoribonuclease domain. In response to ER stress, phosphorylated at Ser-724, Ser-729 and possibly Ser-726; phosphorylation promotes oligomerization and endoribonuclease activity. Dephosphorylated at Ser-724, Ser-729 and possibly Ser-726 by RPAP2 to abort failed ER-stress adaptation and trigger apoptosis. Phosphorylated at Ser-724; in response to the ER stressor tunicamycin. ADP-ribosylated by PARP16 upon ER stress, which increases both kinase and endonuclease activities. As to expression, expressed in liver (at protein level). Ubiquitously expressed. High levels in thymus, liver and lung. In the brain, preferentially expressed in cortical, hippocampal and olfactory neurons.

It is found in the endoplasmic reticulum membrane. The enzyme catalyses L-seryl-[protein] + ATP = O-phospho-L-seryl-[protein] + ADP + H(+). It catalyses the reaction L-threonyl-[protein] + ATP = O-phospho-L-threonyl-[protein] + ADP + H(+). Its activity is regulated as follows. The kinase domain is activated by trans-autophosphorylation following homodimerization. Kinase activity is required for activation of the endoribonuclease domain. Endoribonuclease activity is specifically inhibited by hydroxy-aryl-aldehydes (HAA) MKC9989, OICR464 and OICR573. Serine/threonine-protein kinase and endoribonuclease that acts as a key sensor for the endoplasmic reticulum unfolded protein response (UPR). In unstressed cells, the endoplasmic reticulum luminal domain is maintained in its inactive monomeric state by binding to the endoplasmic reticulum chaperone HSPA5/BiP. Accumulation of misfolded protein in the endoplasmic reticulum causes release of HSPA5/BiP, allowing the luminal domain to homodimerize, promoting autophosphorylation of the kinase domain and subsequent activation of the endoribonuclease activity. The endoribonuclease activity is specific for XBP1 mRNA and excises 26 nucleotides from XBP1 mRNA. The resulting spliced transcript of XBP1 encodes a transcriptional activator protein that up-regulates expression of UPR target genes. Acts as an upstream signal for ER stress-induced GORASP2-mediated unconventional (ER/Golgi-independent) trafficking of CFTR to cell membrane by modulating the expression and localization of SEC16A. The protein is Serine/threonine-protein kinase/endoribonuclease IRE1 of Mus musculus (Mouse).